A 91-amino-acid chain; its full sequence is Translation initiation factor IF-1 (91 aa).

An S1-like domain is found at Met-1 to Lys-72. The disordered stretch occupies residues Arg-70–Arg-91.

Belongs to the IF-1 family. Component of the 30S ribosomal translation pre-initiation complex which assembles on the 30S ribosome in the order IF-2 and IF-3, IF-1 and N-formylmethionyl-tRNA(fMet); mRNA recruitment can occur at any time during PIC assembly.

It localises to the cytoplasm. Its function is as follows. One of the essential components for the initiation of protein synthesis. Stabilizes the binding of IF-2 and IF-3 on the 30S subunit to which N-formylmethionyl-tRNA(fMet) subsequently binds. Helps modulate mRNA selection, yielding the 30S pre-initiation complex (PIC). Upon addition of the 50S ribosomal subunit IF-1, IF-2 and IF-3 are released leaving the mature 70S translation initiation complex. This Azorhizobium caulinodans (strain ATCC 43989 / DSM 5975 / JCM 20966 / LMG 6465 / NBRC 14845 / NCIMB 13405 / ORS 571) protein is Translation initiation factor IF-1.